Consider the following 1483-residue polypeptide: Heme-responsive zinc finger transcription factor HAP1 (1483 aa).

Polar residues predominate over residues 1-50; that stretch reads MSNTPYNSSVPSIASMTQSSVSRSPNMHTATTPGANTSSNSPPLHMSSDS. The disordered stretch occupies residues 1–56; the sequence is MSNTPYNSSVPSIASMTQSSVSRSPNMHTATTPGANTSSNSPPLHMSSDSSKIKRK. 6 residues coordinate Zn(2+): C64, C67, C74, C81, C84, and C93. The zn(2)-C6 fungal-type DNA-binding region spans 64 to 93; it reads CTICRKRKVKCDKLRPHCQQCTKTGVAHLC. Residues 105–134 adopt a coiled-coil conformation; the sequence is EKELLKDNELKKLRERVKSLEKTLSKVHSS. Positions 126 to 208 are disordered; that stretch reads KTLSKVHSSP…ANSSSLSISN (83 aa). The span at 130-142 shows a compositional bias: low complexity; the sequence is KVHSSPSSNSLKS. Polar residues-rich tracts occupy residues 143–152 and 160–176; these read YNTPESSNLF and TLVNANTGSASSASHMH. Low complexity predominate over residues 177 to 208; that stretch reads QQQQQQQQQEQQQDFSRSANANANSSSLSISN. Residues 244–444 form a heme-responsive; required for HMC formation region; the sequence is KGDPYLKLLW…NTIPHHQPQS (201 aa). 6 HRM repeats span residues 280–285, 299–304, 323–328, 347–352, 389–394, and 415–420; these read KCPINH, KCPVDH, RCPVDH, and RCPIDH. Polar residues-rich tracts occupy residues 432-447 and 706-734; these read STHNTIPHHQPQSGSH and QLNATIPATSQDVSNNGSKKANPSTNPTL. Disordered regions lie at residues 432–458 and 706–767; these read STHNTIPHHQPQSGSHARSHPAQSRKH and QLNA…KENQ. Positions 735 to 759 are enriched in low complexity; sequence NNNMSAATTNSSSRSGSADSRSGSN. An HRM 7 repeat occupies 1192 to 1197; it reads KCPVYQ. Residues 1384–1411 are disordered; it reads TANTDTSANGSALSTLTSPQGSDLASNS. The segment covering 1388–1411 has biased composition (polar residues); the sequence is DTSANGSALSTLTSPQGSDLASNS.

In terms of assembly, binds DNA as a homodimer. Interacts with SRO9 and YDJ1. In the absence of heme, binds to at least four cellular proteins, including YDJ1 and SRO9, forming a high-molecular-weight complex (HMC) which results in repression of its activity and dictates its DNA-binding specificity.

The protein localises to the nucleus. Its function is as follows. Regulation of oxygen dependent gene expression. It modulates the expression of Iso-1 (CYP1) and Iso-2 (CYP3) cytochrome c. In response to heme, promotes transcription of genes encoding functions required for respiration, controlling oxidative damage and repression of anaerobic genes. Binds to the sequence 5'-CGGNNNTNNCGG-3'. Is non-functional in terms of iso-1 cytochrome c expression in strain S288c and its derivatives. This is Heme-responsive zinc finger transcription factor HAP1 (HAP1) from Saccharomyces cerevisiae (Baker's yeast).